Here is a 472-residue protein sequence, read N- to C-terminus: Divinyl ether synthase CYP74 (472 aa).

C425 provides a ligand contact to heme.

This sequence belongs to the cytochrome P450 family. The cofactor is heme. Expressed mainly in bulbs, and at lower levels in roots.

The enzyme catalyses (13S)-hydroperoxy-(9Z,11E)-octadecadienoate = etheroleate + H2O. It carries out the reaction (13S)-hydroperoxy-(9Z,11E,15Z)-octadecatrienoate = etherolenate + H2O. It catalyses the reaction (9S)-hydroperoxy-(10E,12Z)-octadecadienoate = colneleate + H2O. The catalysed reaction is (9S)-hydroperoxy-(10E,12Z,15Z)-octadecatrienoate = colnelenate + H2O. It functions in the pathway lipid metabolism; oxylipin biosynthesis. Functionally, divinyl ether synthase involved in oxylipin biosynthesis. Catalyzes the conversion of (13S)-hydroperoxy-(9Z,11E)-octadecadienoate (13-HPOD) to etheroleate and (13S)-hydroperoxy-(9Z,11E,15Z)-octadecatrienoate (13-HPOT) to etherolenate. Catalyzes the conversion of (9S)-hydroperoxy-(10E,12Z)-octadecadienoate (9-HPOD) to colneleate and (9S)-hydroperoxy-(10E,12Z,15Z)-octadecatrienoate (9-HPOT) colnelenate. The chain is Divinyl ether synthase CYP74 from Allium sativum (Garlic).